The primary structure comprises 502 residues: Putative F-box/FBD/LRR-repeat protein At5g22610 (502 aa).

An F-box domain is found at 17–63 (EDLISKLPEVLLSQILSYLPTKDIVRTSVLSKRWKSVWLLIPGLDLD). LRR repeat units lie at residues 70 to 98 (YDTF…KLSI), 99 to 127 (QKNE…DVEF), 147 to 180 (CKTL…CLEE), 181 to 206 (NVYS…TIVK), 208 to 228 (DDNV…SVGY), 238 to 263 (YYYD…TFNN), and 344 to 373 (SVWL…VLET). The region spanning 384-435 (VERRVSSVPECLLSSLEFVEIKNRISVDDGALEVARYFVENSVNLQKVVLRL) is the FBD domain.

This is Putative F-box/FBD/LRR-repeat protein At5g22610 from Arabidopsis thaliana (Mouse-ear cress).